The sequence spans 1235 residues: ATP-dependent helicase/nuclease subunit A (1235 aa).

The UvrD-like helicase ATP-binding domain occupies 3–471 (TKWTETQKSA…IKLSENFRSR (469 aa)). ATP is bound at residue 24 to 31 (AGAGTGKT). Positions 509–808 (PFEGNCGGDV…RIMSIHKSKG (300 aa)) constitute a UvrD-like helicase C-terminal domain.

The protein belongs to the helicase family. AddA subfamily. In terms of assembly, heterodimer of AddA and AddB/RexB. Mg(2+) is required as a cofactor.

The enzyme catalyses Couples ATP hydrolysis with the unwinding of duplex DNA by translocating in the 3'-5' direction.. The catalysed reaction is ATP + H2O = ADP + phosphate + H(+). Its function is as follows. The heterodimer acts as both an ATP-dependent DNA helicase and an ATP-dependent, dual-direction single-stranded exonuclease. Recognizes the chi site generating a DNA molecule suitable for the initiation of homologous recombination. The AddA nuclease domain is required for chi fragment generation; this subunit has the helicase and 3' -&gt; 5' nuclease activities. The chain is ATP-dependent helicase/nuclease subunit A from Clostridium kluyveri (strain ATCC 8527 / DSM 555 / NBRC 12016 / NCIMB 10680 / K1).